The primary structure comprises 146 residues: Hemoglobin subunit beta (146 aa).

Val1 carries the post-translational modification N-acetylvaline. Residues 2-146 (HLTAEEKAAV…VATALAHKYH (145 aa)) form the Globin domain. Thr12 is subject to Phosphothreonine. At Ser44 the chain carries Phosphoserine. Residue Lys59 is modified to N6-acetyllysine. His63 contributes to the heme b binding site. Lys82 carries the N6-acetyllysine modification. Position 92 (His92) interacts with heme b. Cys93 bears the S-nitrosocysteine mark. Lys144 is modified (N6-acetyllysine).

This sequence belongs to the globin family. In terms of assembly, heterotetramer of two alpha chains and two beta chains. Red blood cells.

Functionally, involved in oxygen transport from the lung to the various peripheral tissues. The protein is Hemoglobin subunit beta (HBB) of Mustela lutreola (European mink).